Here is a 294-residue protein sequence, read N- to C-terminus: MAGQPAATGSPSADKDGMEPNVVARISQWADDHLRLVRNISTGMAIAGIMLLLRSIRLTSKFTSSSDIPVEFIRRNVKLRGRLRRITENGLEIEHIPITLPIIASLRKEPRGALLVKLAGVELAETGKAWLQKELKPSQLLWFQLLGKENSALFCYLLVSKGGYFSVNLNEEILRRGLGKTVLVKGLKYDSKIYWTVHRNLLKAELTALKKGEGIWKEDSEKESYLEKFKDSWREIWKKDSFLKTTGSDFSLKKESYYEKLKRTYEIWKDNMNNCSLILKFRELISRINFRRKG.

Residue Ala2 is modified to N-acetylalanine. A helical membrane pass occupies residues 40–56 (ISTGMAIAGIMLLLRSI).

As to expression, highly expressed in ileocecal tissue and endometrium.

Its subcellular location is the membrane. The protein localises to the secreted. In terms of biological role, secreted protein may play a role in transcription regulation via the MAPK3/MAPK1 pathway through an unidentified receptor on the plasma membrane. The polypeptide is Protein C3orf33 (C3orf33) (Homo sapiens (Human)).